Here is a 181-residue protein sequence, read N- to C-terminus: Malignant T-cell-amplified sequence 2 (181 aa).

Residues 92 to 171 enclose the PUA domain; sequence LPHQQVDKGA…IGIENIHYLN (80 aa).

This sequence belongs to the MCTS1 family.

Its subcellular location is the cytoplasm. The sequence is that of Malignant T-cell-amplified sequence 2 from Mus musculus (Mouse).